A 943-amino-acid chain; its full sequence is PAX-interacting protein 1 (943 aa).

BRCT domains follow at residues Val8–Pro93 and Glu94–Pro182. Disordered regions lie at residues Pro190–Gln281, Ala400–Arg507, and Gln620–Thr641. Residues Glu198 to Ser214 are compositionally biased toward basic and acidic residues. Residues Ser220–Pro230 are compositionally biased toward low complexity. A compositionally biased stretch (low complexity) spans Gln620–Gln635. 2 BRCT domains span residues Pro664–His756 and Pro763–Ser851. A Nuclear localization signal motif is present at residues Gly730–Lys747.

As to quaternary structure, interacts with smad2 via its last three BRCT domain-containing regions in an activin signal-dependent manner.

It is found in the nucleus. Involved in DNA damage response. May function as transcriptional cofactor in TGF beta signaling. Accentuates Smad2-dependent transcription. In Danio rerio (Zebrafish), this protein is PAX-interacting protein 1 (paxip1).